The following is a 345-amino-acid chain: Eukaryotic translation initiation factor 3 subunit F (345 aa).

Residues V30–G166 enclose the MPN domain. The interval G308 to A345 is disordered. Residues Q318–G331 are compositionally biased toward gly residues. Residues N335–A345 show a composition bias toward basic and acidic residues.

It belongs to the eIF-3 subunit F family. In terms of assembly, component of the eukaryotic translation initiation factor 3 (eIF-3) complex.

The protein resides in the cytoplasm. Its function is as follows. Component of the eukaryotic translation initiation factor 3 (eIF-3) complex, which is involved in protein synthesis of a specialized repertoire of mRNAs and, together with other initiation factors, stimulates binding of mRNA and methionyl-tRNAi to the 40S ribosome. The eIF-3 complex specifically targets and initiates translation of a subset of mRNAs involved in cell proliferation. The polypeptide is Eukaryotic translation initiation factor 3 subunit F (Aspergillus terreus (strain NIH 2624 / FGSC A1156)).